We begin with the raw amino-acid sequence, 487 residues long: MTELHHLTVTAAQAALAAGDITAVELTEACLARINATEPTIRAFLHLTPDAALAAARAADERRQQGRSLGPLDGIPIAIKDVICTDGVPTTAGSRILAGFRPPYNATVIERLVAAGAVLVGKLNCDEFAMGSSTENSAYQITTNPWDPTRVPGGSSGGSAAAVAAGQVPATLGTDTGGSIRQPAALCGISGLKPTYGRVSRYGLIAYGSSLDQIGPMAWTVADLAVLLNVIAGHDPRDGTSAPIDTPDYTTALTGDIRGLRIGIPREYFVEGMEPGVESATRTAIEVLRDLGAILVDVSLPHTRYALPTYYIIAPAEASANLARFDGVRYGFRAEGETMWEQIEQTRGQGFGPEVRRRIMLGTYALSAGYYDAYYRRAQQVRTLIKRDFEQVFTQVDLLAAPTSPTVAFPIGQKINDPLAMYLSDVCTLPINLAGVPALVVPCGFSEGLPVGLQLIGRPFDEATLLRVGDAYQRLTEWHTQRPRLVV.

Active-site charge relay system residues include lysine 80 and serine 155. Serine 179 serves as the catalytic Acyl-ester intermediate.

The protein belongs to the amidase family. GatA subfamily. As to quaternary structure, heterotrimer of A, B and C subunits.

The enzyme catalyses L-glutamyl-tRNA(Gln) + L-glutamine + ATP + H2O = L-glutaminyl-tRNA(Gln) + L-glutamate + ADP + phosphate + H(+). Functionally, allows the formation of correctly charged Gln-tRNA(Gln) through the transamidation of misacylated Glu-tRNA(Gln) in organisms which lack glutaminyl-tRNA synthetase. The reaction takes place in the presence of glutamine and ATP through an activated gamma-phospho-Glu-tRNA(Gln). This Chloroflexus aurantiacus (strain ATCC 29366 / DSM 635 / J-10-fl) protein is Glutamyl-tRNA(Gln) amidotransferase subunit A.